We begin with the raw amino-acid sequence, 118 residues long: Large ribosomal subunit protein bL19 (118 aa).

Belongs to the bacterial ribosomal protein bL19 family.

In terms of biological role, this protein is located at the 30S-50S ribosomal subunit interface and may play a role in the structure and function of the aminoacyl-tRNA binding site. This chain is Large ribosomal subunit protein bL19, found in Aliarcobacter butzleri (strain RM4018) (Arcobacter butzleri).